Reading from the N-terminus, the 312-residue chain is Pre-mRNA-splicing factor 38A (312 aa).

Positions 1–179 (MANRTVKDAH…VLEETEQLDP (179 aa)) are N-terminal protein interaction domain. The segment at 180-312 (RVSALEEDMD…SHKKSRRGNE (133 aa)) is disordered. Residues 184 to 201 (LEEDMDDVESSEEEEDDD) are compositionally biased toward acidic residues. The segment covering 202-223 (EKGRDPSPEHHRRNYRDLDRPR) has biased composition (basic and acidic residues). Composition is skewed to basic residues over residues 224–294 (RSPS…RSHS) and 301–312 (KKSHKKSRRGNE).

It belongs to the PRP38 family. As to quaternary structure, component of the spliceosome B complex.

It is found in the nucleus. Functionally, involved in pre-mRNA splicing as a component of the spliceosome. The protein is Pre-mRNA-splicing factor 38A (prpf38a) of Xenopus laevis (African clawed frog).